Reading from the N-terminus, the 231-residue chain is Mediator of RNA polymerase II transcription subunit 18 (231 aa).

Residues 191–218 (HLTDIEALNKAVKELEKVKTELHGLMNL) are a coiled coil.

It belongs to the Mediator complex subunit 18 family. As to quaternary structure, component of the Mediator complex.

The protein resides in the nucleus. Its function is as follows. Component of the Mediator complex, a coactivator involved in the regulated transcription of nearly all RNA polymerase II-dependent genes. Mediator functions as a bridge to convey information from gene-specific regulatory proteins to the basal RNA polymerase II transcription machinery. Mediator is recruited to promoters by direct interactions with regulatory proteins and serves as a scaffold for the assembly of a functional preinitiation complex with RNA polymerase II and the general transcription factors. This is Mediator of RNA polymerase II transcription subunit 18 (SRB5) from Yarrowia lipolytica (strain CLIB 122 / E 150) (Yeast).